An 86-amino-acid chain; its full sequence is Toxin Tpa4 (86 aa).

Positions 1–19 (MNYFVLIAVACLLTAGTES) are cleaved as a signal peptide. One can recognise an LCN-type CS-alpha/beta domain in the interval 21–82 (KDGYPLEYDN…EPIKTSGRCR (62 aa)). Disulfide bonds link Cys-31-Cys-81, Cys-35-Cys-57, Cys-43-Cys-64, and Cys-47-Cys-66. The residue at position 83 (Pro-83) is a Proline amide.

The protein belongs to the long (4 C-C) scorpion toxin superfamily. Sodium channel inhibitor family. Alpha subfamily. Expressed by the venom gland.

Its subcellular location is the secreted. Functionally, alpha toxins bind voltage-independently at site-3 of sodium channels (Nav) and inhibit the inactivation of the activated channels, thereby blocking neuronal transmission. This Tityus pachyurus (Colombian scorpion) protein is Toxin Tpa4.